A 362-amino-acid polypeptide reads, in one-letter code: Peptide chain release factor 1 (362 aa).

N5-methylglutamine is present on Q237.

Belongs to the prokaryotic/mitochondrial release factor family. In terms of processing, methylated by PrmC. Methylation increases the termination efficiency of RF1.

The protein resides in the cytoplasm. Its function is as follows. Peptide chain release factor 1 directs the termination of translation in response to the peptide chain termination codons UAG and UAA. This is Peptide chain release factor 1 from Vibrio vulnificus (strain CMCP6).